The chain runs to 394 residues: GDP-mannose transporter (394 aa).

Residues Met1–Pro55 are Cytoplasmic-facing. Residues Ala56–Val76 form a helical membrane-spanning segment. Topologically, residues Ser77–Glu80 are lumenal. A helical transmembrane segment spans residues Trp81–Phe101. Topologically, residues Cys102–Lys121 are cytoplasmic. A helical membrane pass occupies residues Trp122–Ser144. The Lumenal portion of the chain corresponds to Val145 to Thr149. A helical membrane pass occupies residues Ile150–Phe167. The Cytoplasmic segment spans residues Gly168–Pro173. The helical transmembrane segment at Leu174–Ile198 threads the bilayer. The Lumenal portion of the chain corresponds to His199–Thr213. Residues Leu214–Gly234 traverse the membrane as a helical segment. Residues Met235 to Asp246 lie on the Cytoplasmic side of the membrane. Residues Trp247–Ile267 form a helical membrane-spanning segment. Topologically, residues Ala268–Ala287 are lumenal. A helical membrane pass occupies residues Leu288–Trp308. The Cytoplasmic portion of the chain corresponds to Cys309–Thr316. The chain crosses the membrane as a helical span at residues Thr317 to Ala339. Over Pro340–Thr342 the chain is Lumenal. A helical transmembrane segment spans residues Phe343–Ala362. At Lys363–Ser394 the chain is on the cytoplasmic side. The interval Lys371–Ser394 is disordered. The segment covering Leu374–Ser394 has biased composition (polar residues).

The protein belongs to the TPT transporter family. SLC35D subfamily. As to quaternary structure, homooligomer.

It localises to the golgi apparatus membrane. The protein resides in the cytoplasmic vesicle membrane. The protein localises to the endoplasmic reticulum membrane. Involved in the import of GDP-mannose from the cytoplasm into the Golgi lumen. In Pyricularia oryzae (strain 70-15 / ATCC MYA-4617 / FGSC 8958) (Rice blast fungus), this protein is GDP-mannose transporter (VRG4).